The following is a 568-amino-acid chain: Involucrin (568 aa).

2 disordered regions span residues 23–499 (CSPA…EKEL) and 517–568 (RKKH…HEVQ). The span at 25 to 36 (PAQTQQEQTKQP) shows a compositional bias: low complexity. The segment covering 49–77 (TQEKGFPKHEEKEANPVKDLPEQESEHHQ) has biased composition (basic and acidic residues). Positions 78–88 (QPGPQKQQLQV) are enriched in low complexity. A compositionally biased stretch (basic and acidic residues) spans 89–106 (KKPEQELQEQELHSEKQP). 3 stretches are compositionally biased toward low complexity: residues 107 to 121 (QEPQGLLCLGQQQQR), 133 to 154 (HQQPQQESQGQGLCLGQQQDVL), and 172 to 181 (PELPLGQQQK). Positions 193-213 (KQQKLHLVERHQEPQEQELHH) are enriched in basic and acidic residues. Residues 217–232 (QKQQQPQEQELQLVQH) show a composition bias toward low complexity. Composition is skewed to basic and acidic residues over residues 266–333 (ESHE…HQET) and 345–456 (KPHE…HLGK). Residues 457 to 467 (QQEQQIEYEGY) are compositionally biased toward low complexity. Phosphoserine is present on Ser-472. Composition is skewed to basic and acidic residues over residues 478–499 (KQEKASRGQELDDSHLEQEKEL), 517–532 (RKKHKLENLTQKEKQI), and 551–568 (VKEDSLTTKKQQHSHEVQ).

Belongs to the involucrin family. As to quaternary structure, directly or indirectly cross-linked to cornifelin (CNFN). Substrate of transglutaminase. Specific glutamines or lysines are cross-linked to keratins, desmoplakin and to inter involucrin molecules. Keratinocytes of epidermis and other stratified squamous epithelia.

The protein localises to the cytoplasm. Part of the insoluble cornified cell envelope (CE) of stratified squamous epithelia. The protein is Involucrin (Ivl) of Rattus norvegicus (Rat).